Consider the following 761-residue polypeptide: Copper-exporting P-type ATPase (761 aa).

Thr-2 bears the N-acetylthreonine mark. The 65-residue stretch at 14-78 (QRIQLRISGM…AVRRAGYQAD (65 aa)) folds into the HMA domain. Cu(+) is bound by residues Cys-25 and Cys-28. Helical transmembrane passes span 102-122 (LAIAAVLFVPVADLSVMFGVV), 129-149 (GWQWVLSALALPVVTWAAWPF), 164-184 (METLISVGITAATIWSLYTVF), 199-219 (LLGSDAIYFEVAAGVTVFVLV), 361-381 (VFVPAVLVIAALTAAGWLIAG), and 387-407 (AVSAALAVLVIACPCALGLAT). Asp-443 functions as the 4-aspartylphosphate intermediate in the catalytic mechanism. A run of 2 helical transmembrane segments spans residues 695 to 714 (MVWAFGYNIAAIPVAAAGLL) and 718 to 735 (VAGAAMAFSSFFVVSNSL).

It belongs to the cation transport ATPase (P-type) (TC 3.A.3) family. Type IB subfamily.

The protein resides in the cell membrane. It carries out the reaction Cu(+)(in) + ATP + H2O = Cu(+)(out) + ADP + phosphate + H(+). ATPase activity is stimulated by Cu(+) ions. Its function is as follows. Involved in copper export. Could be involved in the copper detoxification of mycobacterial cells. The polypeptide is Copper-exporting P-type ATPase (ctpA) (Mycobacterium tuberculosis (strain ATCC 25618 / H37Rv)).